Consider the following 111-residue polypeptide: Nucleoid-associated protein NMA1657 (111 aa).

Belongs to the YbaB/EbfC family. Homodimer.

Its subcellular location is the cytoplasm. The protein localises to the nucleoid. In terms of biological role, binds to DNA and alters its conformation. May be involved in regulation of gene expression, nucleoid organization and DNA protection. This Neisseria meningitidis serogroup A / serotype 4A (strain DSM 15465 / Z2491) protein is Nucleoid-associated protein NMA1657.